Reading from the N-terminus, the 425-residue chain is Dual-specificity RNA methyltransferase RlmN (425 aa).

Glu-136 serves as the catalytic Proton acceptor. The region spanning 142–389 (GDDRGTLCVS…VRTPRGRDIL (248 aa)) is the Radical SAM core domain. A disulfide bond links Cys-149 and Cys-392. [4Fe-4S] cluster-binding residues include Cys-156, Cys-160, and Cys-163. S-adenosyl-L-methionine-binding positions include 218-219 (GE), Ser-250, 272-274 (SLH), and Asn-349. The S-methylcysteine intermediate role is filled by Cys-392.

It belongs to the radical SAM superfamily. RlmN family. [4Fe-4S] cluster serves as cofactor.

It localises to the cytoplasm. It carries out the reaction adenosine(2503) in 23S rRNA + 2 reduced [2Fe-2S]-[ferredoxin] + 2 S-adenosyl-L-methionine = 2-methyladenosine(2503) in 23S rRNA + 5'-deoxyadenosine + L-methionine + 2 oxidized [2Fe-2S]-[ferredoxin] + S-adenosyl-L-homocysteine. The enzyme catalyses adenosine(37) in tRNA + 2 reduced [2Fe-2S]-[ferredoxin] + 2 S-adenosyl-L-methionine = 2-methyladenosine(37) in tRNA + 5'-deoxyadenosine + L-methionine + 2 oxidized [2Fe-2S]-[ferredoxin] + S-adenosyl-L-homocysteine. In terms of biological role, specifically methylates position 2 of adenine 2503 in 23S rRNA and position 2 of adenine 37 in tRNAs. m2A2503 modification seems to play a crucial role in the proofreading step occurring at the peptidyl transferase center and thus would serve to optimize ribosomal fidelity. This is Dual-specificity RNA methyltransferase RlmN from Methylorubrum populi (strain ATCC BAA-705 / NCIMB 13946 / BJ001) (Methylobacterium populi).